The chain runs to 110 residues: Ig lambda-1 chain V region S178 (110 aa).

In terms of domain architecture, Ig-like spans 1–106; that stretch reads QAVVTQESAL…RWVFGGGTKL (106 aa).

The protein is Ig lambda-1 chain V region S178 of Mus musculus (Mouse).